The chain runs to 144 residues: MMDLSPNNQIEDRKPILTADGLVQTSNSPFEPTISQETQTSNGIGGQCHLTVDQLDIEILPIIYDIVRCVEKDPLENAVKLRESQDCNHKIFELQKRFESAREQIRQLPGIDFNKEEQQQRLELLRNQLKLKQQLIRKYKDTEF.

Positions 85 to 143 (QDCNHKIFELQKRFESAREQIRQLPGIDFNKEEQQQRLELLRNQLKLKQQLIRKYKDTE) form a coiled coil.

This sequence belongs to the Mediator complex subunit 9 family. In terms of assembly, component of the Mediator complex.

The protein localises to the nucleus. In terms of biological role, component of the Mediator complex, a coactivator involved in the regulated transcription of nearly all RNA polymerase II-dependent genes. Mediator functions as a bridge to convey information from gene-specific regulatory proteins to the basal RNA polymerase II transcription machinery. Mediator is recruited to promoters by direct interactions with regulatory proteins and serves as a scaffold for the assembly of a functional preinitiation complex with RNA polymerase II and the general transcription factors. This is Mediator of RNA polymerase II transcription subunit 9 (MED9) from Drosophila melanogaster (Fruit fly).